Consider the following 81-residue polypeptide: Photosystem I iron-sulfur center (81 aa).

2 4Fe-4S ferredoxin-type domains span residues 2-31 and 37-68; these read SHSV…MVPW and GQIA…VRVY. [4Fe-4S] cluster contacts are provided by cysteine 11, cysteine 14, cysteine 17, cysteine 21, cysteine 48, cysteine 51, cysteine 54, and cysteine 58.

The eukaryotic PSI reaction center is composed of at least 11 subunits. [4Fe-4S] cluster is required as a cofactor.

The protein resides in the plastid. Its subcellular location is the chloroplast thylakoid membrane. It carries out the reaction reduced [plastocyanin] + hnu + oxidized [2Fe-2S]-[ferredoxin] = oxidized [plastocyanin] + reduced [2Fe-2S]-[ferredoxin]. In terms of biological role, apoprotein for the two 4Fe-4S centers FA and FB of photosystem I (PSI); essential for photochemical activity. FB is the terminal electron acceptor of PSI, donating electrons to ferredoxin. The C-terminus interacts with PsaA/B/D and helps assemble the protein into the PSI complex. Required for binding of PsaD and PsaE to PSI. PSI is a plastocyanin/cytochrome c6-ferredoxin oxidoreductase, converting photonic excitation into a charge separation, which transfers an electron from the donor P700 chlorophyll pair to the spectroscopically characterized acceptors A0, A1, FX, FA and FB in turn. This is Photosystem I iron-sulfur center from Euglena gracilis.